Here is a 142-residue protein sequence, read N- to C-terminus: Protein tost-1 (142 aa).

The segment at K97 to K123 is disordered.

In terms of assembly, component of the tost-1 variant of the PETISCO complex (also called the pid-3, erh-2, tofu-6, and ife-3 small RNA complex) containing at least tost-1, tofu-6, ife-3, pid-3, and erh-2, which plays an essential role in embryogenesis. Within the complex interacts with erh-2. Within the complex interacts with pid-3 and tofu-6. In contrast to the pid-1 variant of the PETISCO complex, the tost-1 variant of the PETISCO complex plays a minor role in the biogenesis of a class of 21 nucleotide PIWI-interacting RNAs (piRNAs) that possess a uracil residue at the 5'-end (also called 21U-RNAs). As to expression, expressed in the germline.

It is found in the cytoplasm. The protein resides in the nucleus. In terms of biological role, component of the tost-1 variant of the PETISCO complex which plays an essential role in embryogenesis. Within the complex acts as an adapter which binds to the complex via erh-2. Does not seem to play a role in the biogenesis of a class of 21 nucleotide PIWI-interacting RNAs (piRNAs) that possess a uracil residue at the 5'-end (also called 21U-RNAs). May inhibit 21U-RNA accumulation. Required for chromosome segregation and cell division in early embryos. In Caenorhabditis elegans, this protein is Protein tost-1.